We begin with the raw amino-acid sequence, 350 residues long: Biotin synthase (350 aa).

Residues 63–281 (GDIELATLLS…IAVARITMPK (219 aa)) enclose the Radical SAM core domain. [4Fe-4S] cluster is bound by residues cysteine 78, cysteine 82, and cysteine 85. The [2Fe-2S] cluster site is built by cysteine 122, cysteine 153, cysteine 213, and arginine 285.

Belongs to the radical SAM superfamily. Biotin synthase family. Homodimer. [4Fe-4S] cluster serves as cofactor. It depends on [2Fe-2S] cluster as a cofactor.

It carries out the reaction (4R,5S)-dethiobiotin + (sulfur carrier)-SH + 2 reduced [2Fe-2S]-[ferredoxin] + 2 S-adenosyl-L-methionine = (sulfur carrier)-H + biotin + 2 5'-deoxyadenosine + 2 L-methionine + 2 oxidized [2Fe-2S]-[ferredoxin]. The protein operates within cofactor biosynthesis; biotin biosynthesis; biotin from 7,8-diaminononanoate: step 2/2. Functionally, catalyzes the conversion of dethiobiotin (DTB) to biotin by the insertion of a sulfur atom into dethiobiotin via a radical-based mechanism. The protein is Biotin synthase of Acidovorax sp. (strain JS42).